The following is a 540-amino-acid chain: CTP synthase (540 aa).

The amidoligase domain stretch occupies residues 1 to 267 (MTKYIFVTGG…DQKVCDFLHL (267 aa)). S13 is a binding site for CTP. S13 contacts UTP. An ATP-binding site is contributed by 14–19 (SLGKGI). Y54 is an L-glutamine binding site. D71 is a binding site for ATP. Positions 71 and 141 each coordinate Mg(2+). CTP is bound by residues 148–150 (DIE), 188–193 (KTKPTQ), and K224. Residues 188-193 (KTKPTQ) and K224 each bind UTP. In terms of domain architecture, Glutamine amidotransferase type-1 spans 294–537 (TITLVGKYVE…IGAASGLPAQ (244 aa)). An L-glutamine-binding site is contributed by G356. C383 serves as the catalytic Nucleophile; for glutamine hydrolysis. L-glutamine contacts are provided by residues 384-387 (LGMQ), E407, and R465. Residues H510 and E512 contribute to the active site.

It belongs to the CTP synthase family. As to quaternary structure, homotetramer.

The catalysed reaction is UTP + L-glutamine + ATP + H2O = CTP + L-glutamate + ADP + phosphate + 2 H(+). It carries out the reaction L-glutamine + H2O = L-glutamate + NH4(+). It catalyses the reaction UTP + NH4(+) + ATP = CTP + ADP + phosphate + 2 H(+). It functions in the pathway pyrimidine metabolism; CTP biosynthesis via de novo pathway; CTP from UDP: step 2/2. Allosterically activated by GTP, when glutamine is the substrate; GTP has no effect on the reaction when ammonia is the substrate. The allosteric effector GTP functions by stabilizing the protein conformation that binds the tetrahedral intermediate(s) formed during glutamine hydrolysis. Inhibited by the product CTP, via allosteric rather than competitive inhibition. Its function is as follows. Catalyzes the ATP-dependent amination of UTP to CTP with either L-glutamine or ammonia as the source of nitrogen. Regulates intracellular CTP levels through interactions with the four ribonucleotide triphosphates. In Lactobacillus johnsonii (strain CNCM I-12250 / La1 / NCC 533), this protein is CTP synthase.